A 124-amino-acid chain; its full sequence is Small ribosomal subunit protein bS6 (124 aa).

The disordered stretch occupies residues 99–124 (PLPAPRIVPGSEPEPVQQQEAAAVEA). Positions 111–124 (PEPVQQQEAAAVEA) are enriched in low complexity.

This sequence belongs to the bacterial ribosomal protein bS6 family.

Binds together with bS18 to 16S ribosomal RNA. This Prochlorococcus marinus (strain MIT 9313) protein is Small ribosomal subunit protein bS6.